A 251-amino-acid chain; its full sequence is Indole-3-glycerol phosphate synthase (251 aa).

A compositionally biased stretch (polar residues) spans 1-12 (MDDSSSLASPVQ). The interval 1 to 27 (MDDSSSLASPVQSILAAARRRDPPTRR) is disordered.

Belongs to the TrpC family.

The enzyme catalyses 1-(2-carboxyphenylamino)-1-deoxy-D-ribulose 5-phosphate + H(+) = (1S,2R)-1-C-(indol-3-yl)glycerol 3-phosphate + CO2 + H2O. The protein operates within amino-acid biosynthesis; L-tryptophan biosynthesis; L-tryptophan from chorismate: step 4/5. The sequence is that of Indole-3-glycerol phosphate synthase from Halobacterium salinarum (strain ATCC 700922 / JCM 11081 / NRC-1) (Halobacterium halobium).